The chain runs to 58 residues: U11-ctenitoxin-Pn1b (58 aa).

Cystine bridges form between Cys-2–Cys-16, Cys-9–Cys-22, Cys-15–Cys-40, Cys-24–Cys-38, and Cys-48–Cys-55.

As to expression, expressed by the venom gland.

It localises to the secreted. In terms of biological role, non-toxic to mice. This is U11-ctenitoxin-Pn1b from Phoneutria nigriventer (Brazilian armed spider).